Here is a 775-residue protein sequence, read N- to C-terminus: Acylamino-acid-releasing enzyme 1 (775 aa).

Active-site charge relay system residues include Ser627, Asp718, and His750.

It belongs to the peptidase S9C family. As to quaternary structure, homotetramer.

It is found in the cytoplasm. It carries out the reaction Cleavage of an N-acetyl or N-formyl amino acid from the N-terminus of a polypeptide.. Catalyzes the hydrolysis of the N-terminal peptide bond of an N-acetylated peptide to generate an N-acetylated amino acid and a peptide with a free N-terminus. The chain is Acylamino-acid-releasing enzyme 1 from Oryza sativa subsp. japonica (Rice).